Reading from the N-terminus, the 568-residue chain is Phenylalanine--tRNA ligase beta subunit (568 aa).

One can recognise a B5 domain in the interval 278–353 (LTPKSFEVEL…IAYGYNEIEP (76 aa)). Mg(2+)-binding residues include Asp-331, Asp-337, Glu-340, and Asp-341.

Belongs to the phenylalanyl-tRNA synthetase beta subunit family. Type 2 subfamily. Tetramer of two alpha and two beta subunits. Requires Mg(2+) as cofactor.

Its subcellular location is the cytoplasm. The catalysed reaction is tRNA(Phe) + L-phenylalanine + ATP = L-phenylalanyl-tRNA(Phe) + AMP + diphosphate + H(+). The chain is Phenylalanine--tRNA ligase beta subunit from Thermococcus gammatolerans (strain DSM 15229 / JCM 11827 / EJ3).